Consider the following 104-residue polypeptide: Colipase-like protein 2 (104 aa).

An N-terminal signal peptide occupies residues M1–P19. 5 disulfide bridges follow: C38–C49, C44–C60, C48–C82, C70–C90, and C84–C101.

Belongs to the colipase family.

The protein resides in the secreted. The chain is Colipase-like protein 2 (Clpsl2) from Rattus norvegicus (Rat).